Reading from the N-terminus, the 243-residue chain is UPF0758 protein Ava_0172 (243 aa).

The MPN domain maps to 113 to 235 (PIDSPVAAVA…HQSLREVTTL (123 aa)). Zn(2+) is bound by residues histidine 184, histidine 186, and aspartate 197. A JAMM motif motif is present at residues 184-197 (HNHPSGNVEPSPED).

The protein belongs to the UPF0758 family.

This is UPF0758 protein Ava_0172 from Trichormus variabilis (strain ATCC 29413 / PCC 7937) (Anabaena variabilis).